The sequence spans 350 residues: Heat-inducible transcription repressor HrcA (350 aa).

This sequence belongs to the HrcA family.

Its function is as follows. Negative regulator of class I heat shock genes (grpE-dnaK-dnaJ and groELS operons). Prevents heat-shock induction of these operons. The protein is Heat-inducible transcription repressor HrcA of Xanthomonas oryzae pv. oryzae (strain KACC10331 / KXO85).